We begin with the raw amino-acid sequence, 644 residues long: Exoribonuclease 2 (644 aa).

Residues 189–516 (RRDLTALDFV…NHRLLKAIIK (328 aa)) form the RNB domain. Residues 561 to 643 (DTRFAAEIID…ETRSIIARPA (83 aa)) enclose the S1 motif domain.

This sequence belongs to the RNR ribonuclease family. RNase II subfamily.

It localises to the cytoplasm. The catalysed reaction is Exonucleolytic cleavage in the 3'- to 5'-direction to yield nucleoside 5'-phosphates.. In terms of biological role, involved in mRNA degradation. Hydrolyzes single-stranded polyribonucleotides processively in the 3' to 5' direction. In Klebsiella pneumoniae subsp. pneumoniae (strain ATCC 700721 / MGH 78578), this protein is Exoribonuclease 2.